The following is a 510-amino-acid chain: GMP synthase [glutamine-hydrolyzing] (510 aa).

The Glutamine amidotransferase type-1 domain occupies 5-195; that stretch reads MIVVLDFGSQ…VFEVCGCRGD (191 aa). Catalysis depends on Cys82, which acts as the Nucleophile. Active-site residues include His169 and Glu171. Positions 196–385 constitute a GMPS ATP-PPase domain; it reads WTMENFIDEQ…LGIPDEIVWR (190 aa). 223–229 serves as a coordination point for ATP; that stretch reads SGGVDSS.

As to quaternary structure, homodimer.

The enzyme catalyses XMP + L-glutamine + ATP + H2O = GMP + L-glutamate + AMP + diphosphate + 2 H(+). It participates in purine metabolism; GMP biosynthesis; GMP from XMP (L-Gln route): step 1/1. In terms of biological role, catalyzes the synthesis of GMP from XMP. This chain is GMP synthase [glutamine-hydrolyzing], found in Geobacillus kaustophilus (strain HTA426).